Consider the following 316-residue polypeptide: Polyprenyl transferase prhE (316 aa).

9 helical membrane passes run 45–65 (VVGV…TFLL), 69–89 (VILS…NDLI), 114–134 (GAAL…LLLP), 135–155 (SQCA…PFGK), 163–183 (LILT…DMSP), 188–208 (IPTL…DIVY), 231–253 (ITDQ…GGIL), 257–276 (GFPF…LRFL), and 296–316 (SCLL…CVRL).

The protein belongs to the UbiA prenyltransferase family. Requires Mg(2+) as cofactor.

The protein localises to the membrane. It catalyses the reaction 3,5-dimethylorsellinate + (2E,6E)-farnesyl diphosphate = (3R)-3-farnesyl-6-hydroxy-2,3,5-trimethyl-4-oxocyclohexa-1,5-diene-1-carboxylate + diphosphate + H(+). Its pathway is secondary metabolite biosynthesis; terpenoid biosynthesis. Functionally, polyprenyl transferase; part of the gene cluster that mediates the biosynthesis of paraherquonin, a meroterpenoid with a unique, highly congested hexacyclic molecular architecture. The first step of the pathway is the synthesis of 3,5-dimethylorsellinic acid (DMOA) by the polyketide synthase prhL. Synthesis of DMOA is followed by farnesylation by the prenyltransferase prhE, methylesterification by the methyl-transferase prhM, epoxidation of the prenyl chain by the flavin-dependent monooxygenase prhF, and cyclization of the farnesyl moiety by the terpene cyclase prhH, to yield the tetracyclic intermediate, protoaustinoid A. The short chain dehydrogenase prhI then oxidizes the C-3 alcohol group of the terpene cyclase product to transform protoaustinoid A into protoaustinoid B. The FAD-binding monooxygenase prhJ catalyzes the oxidation of protoaustinoid B into preaustinoid A which is further oxidized into preaustinoid A1 by FAD-binding monooxygenase phrK. Finally, prhA leads to berkeleydione via the berkeleyone B intermediate. PrhA is a multifunctional dioxygenase that first desaturates at C5-C6 to form berkeleyone B, followed by rearrangement of the A/B-ring to form the cycloheptadiene moiety in berkeleydione. Berkeleydione serves as the key intermediate for the biosynthesis of paraherquonin as well as many other meroterpenoids. The cytochrome P450 monooxygenases prhB, prhD, and prhN, as well as the isomerase prhC, are probably involved in the late stage of paraherquonin biosynthesis, after the production of berkeleydione. Especially prhC might be a multifunctional enzyme that catalyzes the D-ring expansion via intramolecular methoxy rearrangement, as well as the hydrolysis of the expanded D-ring. The protein is Polyprenyl transferase prhE of Penicillium brasilianum.